The sequence spans 107 residues: Class I hydrophobin hgfI (107 aa).

Residues 1 to 24 (MFSKLAIFATAAFAVLAAATPVRR) form the signal peptide. 4 disulfide bridges follow: C27/C88, C34/C82, C35/C68, and C89/C102.

It belongs to the fungal hydrophobin family. In terms of assembly, self-assembles to form functional amyloid fibrils called rodlets with a length range 100-150 nm. Self-assembly into fibrillar rodlets occurs spontaneously at hydrophobic:hydrophilic interfaces and the rodlets further associate laterally to form amphipathic monolayers. In terms of tissue distribution, only weekly expressed in hyphae cultured in liquid medium.

The protein resides in the secreted. Its subcellular location is the cell wall. In terms of biological role, aerial growth, conidiation, and dispersal of filamentous fungi in the environment rely upon a capability of their secreting small amphipathic proteins called hydrophobins (HPBs) with low sequence identity. Class I can self-assemble into an outermost layer of rodlet bundles on aerial cell surfaces, conferring cellular hydrophobicity that supports fungal growth, development and dispersal; whereas Class II form highly ordered films at water-air interfaces through intermolecular interactions but contribute nothing to the rodlet structure. HgfI is a class I hydrophobin that is involved in cell surface hydrophobicity and lowers the surface tension of water and change the nature of the surfaces to which it adsorbs. The chain is Class I hydrophobin hgfI from Grifola frondosa (Maitake).